The primary structure comprises 63 residues: ATP synthase F(0) complex subunit 8 (63 aa).

Residues threonine 8–leucine 24 traverse the membrane as a helical segment. At lysine 57 the chain carries N6-acetyllysine.

The protein belongs to the ATPase protein 8 family. Component of the ATP synthase complex composed at least of ATP5F1A/subunit alpha, ATP5F1B/subunit beta, ATP5MC1/subunit c (homooctomer), MT-ATP6/subunit a, MT-ATP8/subunit 8, ATP5ME/subunit e, ATP5MF/subunit f, ATP5MG/subunit g, ATP5MK/subunit k, ATP5MJ/subunit j, ATP5F1C/subunit gamma, ATP5F1D/subunit delta, ATP5F1E/subunit epsilon, ATP5PF/subunit F6, ATP5PB/subunit b, ATP5PD/subunit d, ATP5PO/subunit OSCP. ATP synthase complex consists of a soluble F(1) head domain (subunits alpha(3) and beta(3)) - the catalytic core - and a membrane F(0) domain - the membrane proton channel (subunits c, a, 8, e, f, g, k and j). These two domains are linked by a central stalk (subunits gamma, delta, and epsilon) rotating inside the F1 region and a stationary peripheral stalk (subunits F6, b, d, and OSCP). Interacts with PRICKLE3.

It localises to the mitochondrion membrane. Functionally, subunit 8, of the mitochondrial membrane ATP synthase complex (F(1)F(0) ATP synthase or Complex V) that produces ATP from ADP in the presence of a proton gradient across the membrane which is generated by electron transport complexes of the respiratory chain. ATP synthase complex consist of a soluble F(1) head domain - the catalytic core - and a membrane F(1) domain - the membrane proton channel. These two domains are linked by a central stalk rotating inside the F(1) region and a stationary peripheral stalk. During catalysis, ATP synthesis in the catalytic domain of F(1) is coupled via a rotary mechanism of the central stalk subunits to proton translocation. In vivo, can only synthesize ATP although its ATP hydrolase activity can be activated artificially in vitro. Part of the complex F(0) domain. This Physeter macrocephalus (Sperm whale) protein is ATP synthase F(0) complex subunit 8.